The sequence spans 191 residues: Glycerol-3-phosphate acyltransferase (191 aa).

Helical transmembrane passes span 5–25 (IILI…IAKI), 51–71 (LAVL…YTAQ), 78–98 (DLYI…PIWL), 114–134 (IALN…VFFI), and 153–173 (SFFF…LIFL).

The protein belongs to the PlsY family. In terms of assembly, probably interacts with PlsX.

It is found in the cell membrane. The enzyme catalyses an acyl phosphate + sn-glycerol 3-phosphate = a 1-acyl-sn-glycero-3-phosphate + phosphate. It participates in lipid metabolism; phospholipid metabolism. Functionally, catalyzes the transfer of an acyl group from acyl-phosphate (acyl-PO(4)) to glycerol-3-phosphate (G3P) to form lysophosphatidic acid (LPA). This enzyme utilizes acyl-phosphate as fatty acyl donor, but not acyl-CoA or acyl-ACP. In Wolbachia pipientis subsp. Culex pipiens (strain wPip), this protein is Glycerol-3-phosphate acyltransferase.